Reading from the N-terminus, the 227-residue chain is MAYPVQLGFQDAASPIMEELLYFHDHTLMIMFLISSLVLYIISLMLTTELIHTSTMDAQEVETVWTILPAVILILIALPSLRILYMMDEISTPSLTLKTMGHQWYWSYEYTDYENLCFDSYMAPPSDLKPGELRLLEVDNRVVLPTELPIRMLISSEDVLHSWTIPSLGVKTDAIPGRLNQATLMASRPGVYYGQCSEICGANHSFMPIVLELVPLKHFEEWLLSML.

At Met1 to Ser14 the chain is on the mitochondrial intermembrane side. A helical transmembrane segment spans residues Pro15–Met45. Over Leu46–Gln59 the chain is Mitochondrial matrix. Residues Glu60–Met87 traverse the membrane as a helical segment. At Asp88–Leu227 the chain is on the mitochondrial intermembrane side. Positions 161, 196, 198, 200, 204, and 207 each coordinate Cu cation. Glu198 contributes to the Mg(2+) binding site.

Belongs to the cytochrome c oxidase subunit 2 family. In terms of assembly, component of the cytochrome c oxidase (complex IV, CIV), a multisubunit enzyme composed of 14 subunits. The complex is composed of a catalytic core of 3 subunits MT-CO1, MT-CO2 and MT-CO3, encoded in the mitochondrial DNA, and 11 supernumerary subunits COX4I, COX5A, COX5B, COX6A, COX6B, COX6C, COX7A, COX7B, COX7C, COX8 and NDUFA4, which are encoded in the nuclear genome. The complex exists as a monomer or a dimer and forms supercomplexes (SCs) in the inner mitochondrial membrane with NADH-ubiquinone oxidoreductase (complex I, CI) and ubiquinol-cytochrome c oxidoreductase (cytochrome b-c1 complex, complex III, CIII), resulting in different assemblies (supercomplex SCI(1)III(2)IV(1) and megacomplex MCI(2)III(2)IV(2)). Found in a complex with TMEM177, COA6, COX18, COX20, SCO1 and SCO2. Interacts with TMEM177 in a COX20-dependent manner. Interacts with COX20. Interacts with COX16. Requires Cu cation as cofactor.

Its subcellular location is the mitochondrion inner membrane. It catalyses the reaction 4 Fe(II)-[cytochrome c] + O2 + 8 H(+)(in) = 4 Fe(III)-[cytochrome c] + 2 H2O + 4 H(+)(out). Component of the cytochrome c oxidase, the last enzyme in the mitochondrial electron transport chain which drives oxidative phosphorylation. The respiratory chain contains 3 multisubunit complexes succinate dehydrogenase (complex II, CII), ubiquinol-cytochrome c oxidoreductase (cytochrome b-c1 complex, complex III, CIII) and cytochrome c oxidase (complex IV, CIV), that cooperate to transfer electrons derived from NADH and succinate to molecular oxygen, creating an electrochemical gradient over the inner membrane that drives transmembrane transport and the ATP synthase. Cytochrome c oxidase is the component of the respiratory chain that catalyzes the reduction of oxygen to water. Electrons originating from reduced cytochrome c in the intermembrane space (IMS) are transferred via the dinuclear copper A center (CU(A)) of subunit 2 and heme A of subunit 1 to the active site in subunit 1, a binuclear center (BNC) formed by heme A3 and copper B (CU(B)). The BNC reduces molecular oxygen to 2 water molecules using 4 electrons from cytochrome c in the IMS and 4 protons from the mitochondrial matrix. This chain is Cytochrome c oxidase subunit 2 (MT-CO2), found in Eulemur macaco (Black lemur).